The following is a 730-amino-acid chain: Pentatricopeptide repeat-containing protein At5g64320, mitochondrial (730 aa).

The transit peptide at 1–18 (MVMLARSKLALDVSRRSQ) directs the protein to the mitochondrion. PPR repeat units lie at residues 110 to 144 (SFDV…GIVF), 145 to 175 (KESL…MRNV), 181 to 215 (TFKS…KIPP), 216 to 250 (TLFT…GCVP), 251 to 285 (NSVI…GCVP), 286 to 320 (DAET…GFAP), 321 to 351 (DDIT…IPKP), 352 to 387 (EIVI…GIVP), 388 to 422 (DVCT…GCKP), 423 to 457 (NVYS…GLKP), 458 to 492 (NTVG…GCKP), 493 to 527 (DVYT…GVVA), 528 to 562 (NTVT…GSPL), 563 to 597 (DEIT…GHAP), 598 to 632 (SNIS…GSTP), 633 to 667 (DIVT…GIPP), and 668 to 702 (DTVT…GFVP).

This sequence belongs to the PPR family. P subfamily.

The protein resides in the mitochondrion. This Arabidopsis thaliana (Mouse-ear cress) protein is Pentatricopeptide repeat-containing protein At5g64320, mitochondrial.